The primary structure comprises 377 residues: UPF0754 membrane protein GK0639 (377 aa).

Helical transmembrane passes span 7-27 (LLFMVAVGALIGGVTNFIAIV) and 357-377 (YLGALLGGLIGAVQGVIGLWL).

This sequence belongs to the UPF0754 family.

The protein localises to the cell membrane. The sequence is that of UPF0754 membrane protein GK0639 from Geobacillus kaustophilus (strain HTA426).